Reading from the N-terminus, the 145-residue chain is Hemoglobin subunit beta (145 aa).

Residues 1–145 (MLTAEEKAAV…VANALAHRYH (145 aa)) form the Globin domain. T11 carries the phosphothreonine modification. Residue S43 is modified to Phosphoserine. The residue at position 58 (K58) is an N6-acetyllysine. H62 provides a ligand contact to heme b. Residue K81 is modified to N6-acetyllysine. H91 provides a ligand contact to heme b. C92 carries the post-translational modification S-nitrosocysteine.

It belongs to the globin family. In terms of assembly, heterotetramer of two alpha chains and two beta chains. As to expression, red blood cells.

Functionally, involved in oxygen transport from the lung to the various peripheral tissues. Functions as an endogenous inhibitor of enkephalin-degrading enzymes such as DPP3, and may thereby play a role as a regulator of pain and inflammation. In Bos taurus (Bovine), this protein is Hemoglobin subunit beta (HBB).